The primary structure comprises 507 residues: MRPPRCLFPAAEILLKAPPSRRCMSSAAAFQPPKIVAAIPWKGSSFFLSNRLFDRSTCLDFVVLRRANGIRSTSASASTTHDSTLSSSPTANHSTSAHKDHKIAPHRKRQAQRREKAAAEAAAAAARGEKPLPPDASSLLAAHAASQTSPLRRHLSACLSLAKPRLTMLVVLTAMATYALYPVPEMLSPSTTETPSLSPLTLLFLTIGTTFCSASANALNMLYEPSTDAKMTRTRNRPLVRNLISKRAAVLFAILSGFVGTGALYFGVNPTVSGLGFANIVIYAGMYTPLKAVTAFNTWIGAVVGGIPPLMGWAAAAGETATKDGSWRELLFASDGSSIGGWVMAGLLFAWQFPHFMALSWPIREEYKKAGLRMLAWTNPARNGRVALRYSFVFIPLCLSLCAAGVTEWSFAVTSFPINAWLIRESVRFWRYEGNKGSARGLFWASVWHLPGVMILALLHKKGMWTRVWRSVFGEDEGEWEEEELDEMMSVAVANTNSHMQNQKTVR.

The span at 72 to 90 (STSASASTTHDSTLSSSPT) shows a compositional bias: low complexity. The interval 72-136 (STSASASTTH…RGEKPLPPDA (65 aa)) is disordered. Positions 99–111 (KDHKIAPHRKRQA) are enriched in basic residues. Helical transmembrane passes span 166–186 (LTML…VPEM), 199–219 (PLTL…ANAL), 248–268 (AAVL…YFGV), 270–290 (PTVS…YTPL), 298–318 (TWIG…AAAG), 339–359 (IGGW…FMAL), 392–412 (FVFI…WSFA), and 441–461 (GLFW…LLHK).

It belongs to the UbiA prenyltransferase family.

The protein localises to the mitochondrion membrane. The enzyme catalyses heme b + (2E,6E)-farnesyl diphosphate + H2O = Fe(II)-heme o + diphosphate. Functionally, converts protoheme IX and farnesyl diphosphate to heme O. This is Protoheme IX farnesyltransferase, mitochondrial (COX10) from Gibberella zeae (strain ATCC MYA-4620 / CBS 123657 / FGSC 9075 / NRRL 31084 / PH-1) (Wheat head blight fungus).